The following is a 246-amino-acid chain: 3-deoxy-manno-octulosonate cytidylyltransferase (246 aa).

It belongs to the KdsB family.

It localises to the cytoplasm. The catalysed reaction is 3-deoxy-alpha-D-manno-oct-2-ulosonate + CTP = CMP-3-deoxy-beta-D-manno-octulosonate + diphosphate. Its pathway is nucleotide-sugar biosynthesis; CMP-3-deoxy-D-manno-octulosonate biosynthesis; CMP-3-deoxy-D-manno-octulosonate from 3-deoxy-D-manno-octulosonate and CTP: step 1/1. The protein operates within bacterial outer membrane biogenesis; lipopolysaccharide biosynthesis. Its function is as follows. Activates KDO (a required 8-carbon sugar) for incorporation into bacterial lipopolysaccharide in Gram-negative bacteria. This Rickettsia africae (strain ESF-5) protein is 3-deoxy-manno-octulosonate cytidylyltransferase.